Reading from the N-terminus, the 202-residue chain is Glycerol-3-phosphate acyltransferase (202 aa).

A run of 6 helical transmembrane segments spans residues 2-22 (MIVVMLILSYLIGAIPNGYVI), 54-74 (FIVTFLDIFKGFITVFFPIWF), 85-105 (FFTHGLIVGLFAILGHVYPIY), 120-140 (VVLGVNPILLLILAIIFFGVL), 141-161 (YIFKYVSLSSIIAAICCVIGS), and 162-182 (LIIQDYILFGMSLLVSIILIV).

It belongs to the PlsY family. As to quaternary structure, probably interacts with PlsX.

The protein resides in the cell membrane. It catalyses the reaction an acyl phosphate + sn-glycerol 3-phosphate = a 1-acyl-sn-glycero-3-phosphate + phosphate. It functions in the pathway lipid metabolism; phospholipid metabolism. Its function is as follows. Catalyzes the transfer of an acyl group from acyl-phosphate (acyl-PO(4)) to glycerol-3-phosphate (G3P) to form lysophosphatidic acid (LPA). This enzyme utilizes acyl-phosphate as fatty acyl donor, but not acyl-CoA or acyl-ACP. The polypeptide is Glycerol-3-phosphate acyltransferase (Staphylococcus haemolyticus (strain JCSC1435)).